A 516-amino-acid chain; its full sequence is Putative Rieske 2Fe-2S iron-sulfur protein MT3926 (516 aa).

A Rieske domain is found at 429 to 516; the sequence is LYTFFKCLTD…RGHQLRSSRP (88 aa). Residues cysteine 469, histidine 471, cysteine 489, and histidine 492 each coordinate [2Fe-2S] cluster.

[2Fe-2S] cluster serves as cofactor.

In Mycobacterium tuberculosis (strain CDC 1551 / Oshkosh), this protein is Putative Rieske 2Fe-2S iron-sulfur protein MT3926.